The following is a 592-amino-acid chain: BRCA1-associated protein (592 aa).

Ser52 is subject to Phosphoserine. A disordered region spans residues 78–124; the sequence is KSNPDELKTTVEERKSSEASPTAQRSKDHSKECINAAPDSPSKQLPD. Basic and acidic residues predominate over residues 80–94; it reads NPDELKTTVEERKSS. Residues Ser97, Ser117, and Ser119 each carry the phosphoserine modification. The RING-type zinc finger occupies 264–304; that stretch reads CTVCLERMDESVNGILTTLCNHSFHSQCLQRWDDTTCPVCR. The UBP-type; degenerate zinc-finger motif lies at 301–393; it reads PVCRYCQTPE…GKIVQYECEG (93 aa). Residues Cys317, Cys320, Cys329, Cys332, Cys337, His344, His348, and His354 each coordinate Zn(2+). A coiled-coil region spans residues 429-537; it reads RIEKDTAEEI…EIQEQLRDVM (109 aa). Residues 565 to 592 are disordered; that stretch reads AMASASSPASSGGSGKLPSRKGRSKRGK. The span at 582–592 shows a compositional bias: basic residues; that stretch reads PSRKGRSKRGK.

Interacts with the nuclear localization signal of BRCA1 and with the N-terminal of KSR1. The C-terminal portion of BCRA1 interacts with DDB1. Expressed in breast epithelial cell lines.

It is found in the cytoplasm. It carries out the reaction S-ubiquitinyl-[E2 ubiquitin-conjugating enzyme]-L-cysteine + [acceptor protein]-L-lysine = [E2 ubiquitin-conjugating enzyme]-L-cysteine + N(6)-ubiquitinyl-[acceptor protein]-L-lysine.. The protein operates within protein modification; protein ubiquitination. Functionally, negatively regulates MAP kinase activation by limiting the formation of Raf/MEK complexes probably by inactivation of the KSR1 scaffold protein. Also acts as a Ras responsive E3 ubiquitin ligase that, on activation of Ras, is modified by auto-polyubiquitination resulting in the release of inhibition of Raf/MEK complex formation. May also act as a cytoplasmic retention protein with a role in regulating nuclear transport. This Homo sapiens (Human) protein is BRCA1-associated protein.